Here is a 288-residue protein sequence, read N- to C-terminus: Phenazine biosynthesis-like domain-containing protein (288 aa).

E46 is a catalytic residue.

The protein belongs to the PhzF family. Interacts with UNRIP/MAWD.

The chain is Phenazine biosynthesis-like domain-containing protein (PBLD) from Pongo abelii (Sumatran orangutan).